Here is a 117-residue protein sequence, read N- to C-terminus: Large ribosomal subunit protein bL20 (117 aa).

Belongs to the bacterial ribosomal protein bL20 family.

In terms of biological role, binds directly to 23S ribosomal RNA and is necessary for the in vitro assembly process of the 50S ribosomal subunit. It is not involved in the protein synthesizing functions of that subunit. The polypeptide is Large ribosomal subunit protein bL20 (Campylobacter fetus subsp. fetus (strain 82-40)).